The following is a 335-amino-acid chain: Tryptophan--tRNA ligase (335 aa).

ATP contacts are provided by residues 19 to 21 (QPS) and 28 to 29 (GN). The 'HIGH' region signature appears at 20 to 29 (PSSGMLHLGN). Asp-143 provides a ligand contact to L-tryptophan. Residues 155–157 (GAD), Ile-192, and 201–205 (KMSKS) contribute to the ATP site. A 'KMSKS' region motif is present at residues 201–205 (KMSKS).

It belongs to the class-I aminoacyl-tRNA synthetase family. In terms of assembly, homodimer.

The protein resides in the cytoplasm. It carries out the reaction tRNA(Trp) + L-tryptophan + ATP = L-tryptophyl-tRNA(Trp) + AMP + diphosphate + H(+). Its function is as follows. Catalyzes the attachment of tryptophan to tRNA(Trp). In Tropheryma whipplei (strain TW08/27) (Whipple's bacillus), this protein is Tryptophan--tRNA ligase.